The chain runs to 475 residues: Aminodeoxychorismate synthase component 1 (475 aa).

This sequence belongs to the anthranilate synthase component I family. In terms of assembly, monomer. Heterodimer consisting of two non-identical subunits: a glutamine amidotransferase subunit (PabA) and a aminodeoxychorismate synthase subunit (PabB). Mg(2+) serves as cofactor.

It catalyses the reaction chorismate + L-glutamine = 4-amino-4-deoxychorismate + L-glutamate. It participates in cofactor biosynthesis; tetrahydrofolate biosynthesis; 4-aminobenzoate from chorismate: step 1/2. Its function is as follows. Part of a heterodimeric complex that catalyzes the two-step biosynthesis of 4-amino-4-deoxychorismate (ADC), a precursor of p-aminobenzoate (PABA) and tetrahydrofolate. In the first step, a glutamine amidotransferase (PabA) generates ammonia as a substrate that, along with chorismate, is used in the second step, catalyzed by aminodeoxychorismate synthase (PabB) to produce ADC. The protein is Aminodeoxychorismate synthase component 1 (pabB) of Streptomyces lividans.